Reading from the N-terminus, the 116-residue chain is Large ribosomal subunit protein bL19 (116 aa).

It belongs to the bacterial ribosomal protein bL19 family.

Functionally, this protein is located at the 30S-50S ribosomal subunit interface and may play a role in the structure and function of the aminoacyl-tRNA binding site. This is Large ribosomal subunit protein bL19 from Pseudomonas fluorescens (strain Pf0-1).